The sequence spans 308 residues: HPr kinase/phosphorylase (308 aa).

Residues H138 and K159 contribute to the active site. Residue 153-160 (GESGLGKS) coordinates ATP. S160 contributes to the Mg(2+) binding site. D177 acts as the Proton acceptor; for phosphorylation activity. Proton donor; for dephosphorylation activity in catalysis. Residues 201-210 (LEVRGLGLLD) are important for the catalytic mechanism of both phosphorylation and dephosphorylation. E202 serves as a coordination point for Mg(2+). R243 is an active-site residue. The segment at 264-269 (QVAAGR) is important for the catalytic mechanism of dephosphorylation.

It belongs to the HPrK/P family. Homohexamer. It depends on Mg(2+) as a cofactor.

It catalyses the reaction [HPr protein]-L-serine + ATP = [HPr protein]-O-phospho-L-serine + ADP + H(+). It carries out the reaction [HPr protein]-O-phospho-L-serine + phosphate + H(+) = [HPr protein]-L-serine + diphosphate. Catalyzes the ATP- as well as the pyrophosphate-dependent phosphorylation of a specific serine residue in HPr, a phosphocarrier protein of the phosphoenolpyruvate-dependent sugar phosphotransferase system (PTS). HprK/P also catalyzes the pyrophosphate-producing, inorganic phosphate-dependent dephosphorylation (phosphorolysis) of seryl-phosphorylated HPr (P-Ser-HPr). The protein is HPr kinase/phosphorylase of Bordetella pertussis (strain Tohama I / ATCC BAA-589 / NCTC 13251).